Consider the following 134-residue polypeptide: Small ribosomal subunit protein uS9 (134 aa).

The tract at residues Glu97–Arg134 is disordered. The segment covering Lys115–Arg134 has biased composition (basic residues).

This sequence belongs to the universal ribosomal protein uS9 family.

The polypeptide is Small ribosomal subunit protein uS9 (rpsI) (Chlamydia pneumoniae (Chlamydophila pneumoniae)).